A 214-amino-acid chain; its full sequence is tRNA (guanine-N(7)-)-methyltransferase (214 aa).

S-adenosyl-L-methionine-binding residues include Asp-35, Glu-60, Asn-87, and Asp-113. Residue Asp-113 is part of the active site. Residues Lys-117 and Asp-149 each contribute to the substrate site.

It belongs to the class I-like SAM-binding methyltransferase superfamily. TrmB family.

It carries out the reaction guanosine(46) in tRNA + S-adenosyl-L-methionine = N(7)-methylguanosine(46) in tRNA + S-adenosyl-L-homocysteine. Its pathway is tRNA modification; N(7)-methylguanine-tRNA biosynthesis. Its function is as follows. Catalyzes the formation of N(7)-methylguanine at position 46 (m7G46) in tRNA. This Prochlorococcus marinus (strain NATL2A) protein is tRNA (guanine-N(7)-)-methyltransferase.